The chain runs to 558 residues: 2-isopropylmalate synthase (558 aa).

Residues 31–305 (PRWCSTDLRD…YPNLDFSDMR (275 aa)) enclose the Pyruvate carboxyltransferase domain. Residues Asp-40, His-244, His-246, and Asn-280 each coordinate Mg(2+). The regulatory domain stretch occupies residues 439–558 (NPDDKGQMKL…NACHPLYKEA (120 aa)).

This sequence belongs to the alpha-IPM synthase/homocitrate synthase family. LeuA type 2 subfamily. Homodimer. Mg(2+) serves as cofactor.

It is found in the cytoplasm. The enzyme catalyses 3-methyl-2-oxobutanoate + acetyl-CoA + H2O = (2S)-2-isopropylmalate + CoA + H(+). The protein operates within amino-acid biosynthesis; L-leucine biosynthesis; L-leucine from 3-methyl-2-oxobutanoate: step 1/4. Functionally, catalyzes the condensation of the acetyl group of acetyl-CoA with 3-methyl-2-oxobutanoate (2-ketoisovalerate) to form 3-carboxy-3-hydroxy-4-methylpentanoate (2-isopropylmalate). This Marinomonas sp. (strain MWYL1) protein is 2-isopropylmalate synthase.